We begin with the raw amino-acid sequence, 281 residues long: ATP phosphoribosyltransferase (281 aa).

The protein belongs to the ATP phosphoribosyltransferase family. Long subfamily. As to quaternary structure, equilibrium between an active dimeric form, an inactive hexameric form and higher aggregates. Interconversion between the various forms is largely reversible and is influenced by the natural substrates and inhibitors of the enzyme. It depends on Mg(2+) as a cofactor.

The protein resides in the cytoplasm. The enzyme catalyses 1-(5-phospho-beta-D-ribosyl)-ATP + diphosphate = 5-phospho-alpha-D-ribose 1-diphosphate + ATP. It participates in amino-acid biosynthesis; L-histidine biosynthesis; L-histidine from 5-phospho-alpha-D-ribose 1-diphosphate: step 1/9. With respect to regulation, feedback inhibited by histidine. In terms of biological role, catalyzes the condensation of ATP and 5-phosphoribose 1-diphosphate to form N'-(5'-phosphoribosyl)-ATP (PR-ATP). Has a crucial role in the pathway because the rate of histidine biosynthesis seems to be controlled primarily by regulation of HisG enzymatic activity. This chain is ATP phosphoribosyltransferase, found in Mycolicibacterium gilvum (strain PYR-GCK) (Mycobacterium gilvum (strain PYR-GCK)).